A 652-amino-acid chain; its full sequence is DNA ligase (652 aa).

Residues 29-33 (DAEYD), 78-79 (SL), and Glu107 contribute to the NAD(+) site. The active-site N6-AMP-lysine intermediate is the Lys109. NAD(+) is bound by residues Arg130, Glu164, Lys278, and Lys302. 4 residues coordinate Zn(2+): Cys395, Cys398, Cys413, and Cys418. In terms of domain architecture, BRCT spans 577 to 652 (TDDAILSGKT…VKDEAWLLDL (76 aa)).

This sequence belongs to the NAD-dependent DNA ligase family. LigA subfamily. Mg(2+) serves as cofactor. It depends on Mn(2+) as a cofactor.

The catalysed reaction is NAD(+) + (deoxyribonucleotide)n-3'-hydroxyl + 5'-phospho-(deoxyribonucleotide)m = (deoxyribonucleotide)n+m + AMP + beta-nicotinamide D-nucleotide.. Its function is as follows. DNA ligase that catalyzes the formation of phosphodiester linkages between 5'-phosphoryl and 3'-hydroxyl groups in double-stranded DNA using NAD as a coenzyme and as the energy source for the reaction. It is essential for DNA replication and repair of damaged DNA. In Streptococcus thermophilus (strain ATCC BAA-491 / LMD-9), this protein is DNA ligase.